A 143-amino-acid polypeptide reads, in one-letter code: Small ribosomal subunit protein eS19B (143 aa).

Belongs to the eukaryotic ribosomal protein eS19 family. Component of the small ribosomal subunit (SSU). Mature yeast ribosomes consist of a small (40S) and a large (60S) subunit. The 40S small subunit contains 1 molecule of ribosomal RNA (18S rRNA) and at least 33 different proteins. The large 60S subunit contains 3 rRNA molecules (25S, 5.8S and 5S rRNA) and at least 46 different proteins.

Its subcellular location is the cytoplasm. The protein resides in the nucleus. In terms of biological role, component of the ribosome, a large ribonucleoprotein complex responsible for the synthesis of proteins in the cell. The small ribosomal subunit (SSU) binds messenger RNAs (mRNAs) and translates the encoded message by selecting cognate aminoacyl-transfer RNA (tRNA) molecules. The large subunit (LSU) contains the ribosomal catalytic site termed the peptidyl transferase center (PTC), which catalyzes the formation of peptide bonds, thereby polymerizing the amino acids delivered by tRNAs into a polypeptide chain. The nascent polypeptides leave the ribosome through a tunnel in the LSU and interact with protein factors that function in enzymatic processing, targeting, and the membrane insertion of nascent chains at the exit of the ribosomal tunnel. eS19 is required for proper maturation of the small (40S) ribosomal subunit. Binds to 40S pre-ribosomal particles, probably required after association of NOC4 but before association of ENP1, TSR1 and RIO2 with 20/21S pre-rRNA. This is Small ribosomal subunit protein eS19B (rps1902) from Schizosaccharomyces pombe (strain 972 / ATCC 24843) (Fission yeast).